We begin with the raw amino-acid sequence, 242 residues long: uncharacterized protein (242 aa).

Disordered regions lie at residues 43–70 (SRRS…TSKD) and 112–162 (RMSR…VTPR). The span at 58 to 70 (QSVSGRKNSTSKD) shows a compositional bias: polar residues. Low complexity-rich tracts occupy residues 122–139 (ERAA…AGHA) and 147–162 (ADGA…VTPR).

This is an uncharacterized protein from Homo sapiens (Human).